The primary structure comprises 340 residues: N-acetyl-gamma-glutamyl-phosphate reductase (340 aa).

Cysteine 149 is a catalytic residue.

It belongs to the NAGSA dehydrogenase family. Type 1 subfamily.

Its subcellular location is the cytoplasm. It catalyses the reaction N-acetyl-L-glutamate 5-semialdehyde + phosphate + NADP(+) = N-acetyl-L-glutamyl 5-phosphate + NADPH + H(+). Its pathway is amino-acid biosynthesis; L-arginine biosynthesis; N(2)-acetyl-L-ornithine from L-glutamate: step 3/4. Its function is as follows. Catalyzes the NADPH-dependent reduction of N-acetyl-5-glutamyl phosphate to yield N-acetyl-L-glutamate 5-semialdehyde. In Ruthia magnifica subsp. Calyptogena magnifica, this protein is N-acetyl-gamma-glutamyl-phosphate reductase.